The sequence spans 1008 residues: Translation initiation factor IF-2 (1008 aa).

Disordered regions lie at residues 113–136 (AVTA…KGNV), 153–235 (DKDS…PAAP), and 253–405 (GLTV…YRKD). 2 stretches are compositionally biased toward basic and acidic residues: residues 153–180 (DKDS…KAKP) and 189–213 (PKPE…KAET). Low complexity-rich tracts occupy residues 294–329 (GPNK…PRPQ) and 342–358 (GGPN…SNGP). The segment covering 365-381 (ASEKGEVTGKQIQDKIK) has biased composition (basic and acidic residues). Residues 507–677 (DRAPIVTIMG…LLEAEMLELK (171 aa)) enclose the tr-type G domain. Positions 516-523 (GHVDHGKT) are G1. 516 to 523 (GHVDHGKT) is a GTP binding site. A G2 region spans residues 541 to 545 (GITQH). The G3 stretch occupies residues 563–566 (DTPG). GTP-binding positions include 563 to 567 (DTPGH) and 617 to 620 (NKID). Positions 617 to 620 (NKID) are G4. The segment at 653 to 655 (SAK) is G5.

It belongs to the TRAFAC class translation factor GTPase superfamily. Classic translation factor GTPase family. IF-2 subfamily.

It is found in the cytoplasm. One of the essential components for the initiation of protein synthesis. Protects formylmethionyl-tRNA from spontaneous hydrolysis and promotes its binding to the 30S ribosomal subunits. Also involved in the hydrolysis of GTP during the formation of the 70S ribosomal complex. The protein is Translation initiation factor IF-2 of Cytophaga hutchinsonii (strain ATCC 33406 / DSM 1761 / CIP 103989 / NBRC 15051 / NCIMB 9469 / D465).